The following is a 110-amino-acid chain: Large ribosomal subunit protein uL22 (110 aa).

This sequence belongs to the universal ribosomal protein uL22 family. As to quaternary structure, part of the 50S ribosomal subunit.

In terms of biological role, this protein binds specifically to 23S rRNA; its binding is stimulated by other ribosomal proteins, e.g. L4, L17, and L20. It is important during the early stages of 50S assembly. It makes multiple contacts with different domains of the 23S rRNA in the assembled 50S subunit and ribosome. Functionally, the globular domain of the protein is located near the polypeptide exit tunnel on the outside of the subunit, while an extended beta-hairpin is found that lines the wall of the exit tunnel in the center of the 70S ribosome. The chain is Large ribosomal subunit protein uL22 from Buchnera aphidicola subsp. Acyrthosiphon pisum (strain 5A).